Consider the following 433-residue polypeptide: Serine/threonine-protein kinase DCLK1 (433 aa).

The interval 1–74 (MLELIEVNGT…GEEESDEGFQ (74 aa)) is disordered. Ser23, Ser25, Ser27, Ser30, Ser40, Ser45, Ser46, Ser48, Ser57, and Ser69 each carry phosphoserine. The span at 40 to 57 (SQHGGSSTSLSSTKVCSS) shows a compositional bias: low complexity. Over residues 59-71 (DENDGPGEEESDE) the composition is skewed to acidic residues. Residues 83–340 (YKVGRTIGDG…AVQVLEHPWV (258 aa)) enclose the Protein kinase domain. ATP is bound by residues 89–97 (IGDGNFAVV) and Lys112. Asp204 (proton acceptor) is an active-site residue. Tyr213 bears the Phosphotyrosine mark. Over residues 388 to 400 (QVFRRRRNQDVRG) the composition is skewed to basic and acidic residues. The interval 388 to 433 (QVFRRRRNQDVRGRYKAQPAPPELNSESEDYSPSSSETVRSPNSPF) is disordered. A phosphoserine mark is found at Ser419, Ser428, and Ser431.

It belongs to the protein kinase superfamily. CAMK Ser/Thr protein kinase family. CaMK subfamily.

The catalysed reaction is L-seryl-[protein] + ATP = O-phospho-L-seryl-[protein] + ADP + H(+). It carries out the reaction L-threonyl-[protein] + ATP = O-phospho-L-threonyl-[protein] + ADP + H(+). Its function is as follows. Probable kinase that may be involved in a calcium-signaling pathway controlling neuronal migration in the developing brain. May also participate in functions of the mature nervous system. This is Serine/threonine-protein kinase DCLK1 (Dclk1) from Rattus norvegicus (Rat).